An 80-amino-acid chain; its full sequence is Conotoxin Vi6.2 (80 aa).

The signal sequence occupies residues 1-22 (MKLTCVLITTVLFLTASQLITA). Positions 23–47 (DYSRDKRQYRAVRLRDEMRNFKGAR) are excised as a propeptide. Cystine bridges form between C49–C62, C56–C67, and C61–C77. 2 positions are modified to 4-hydroxyproline: P60 and P63.

The protein belongs to the conotoxin O1 superfamily. As to expression, expressed by the venom duct.

Its subcellular location is the secreted. Functionally, ion channel inhibitor that inhibits the increase in intracellular calcium upon depolarization in DRG neurons. In vivo, both intraperitoneal and intracranial injections into mice induce hyperactivity. This is Conotoxin Vi6.2 from Conus virgo (Virgin cone).